The following is a 172-amino-acid chain: MSVPGPSSPDGALTRPPYCLEAGEPTPGLSDTSPDEGLIEDLTIEDKAVEQLAEGLLSHYLPDLQRSKQALQELTQNQVVLLDTLEQEISKFKECHSMLDINALFAEAKHYHAKLVNIRKEMLMLHEKTSKLKKRALKLQQKRQKEELEREQQREKEFEREKQLTARPAKRM.

Disordered stretches follow at residues 1–36 and 135–172; these read MSVP…SPDE and RALK…AKRM. Residues 63-167 adopt a coiled-coil conformation; it reads DLQRSKQALQ…FEREKQLTAR (105 aa). Residues 143 to 164 show a composition bias toward basic and acidic residues; it reads RQKEELEREQQREKEFEREKQL.

It belongs to the BLOC1S6 family. As to quaternary structure, interacts with BLOC1S4 and DTNBP1/BLOC1S7. Homodimer. Component of the biogenesis of lysosome-related organelles complex 1 (BLOC-1) composed of BLOC1S1, BLOC1S2, BLOC1S3, BLOC1S4, BLOC1S5, BLOC1S6, DTNBP1/BLOC1S7 and SNAPIN/BLOC1S8. Octamer composed of one copy each BLOC1S1, BLOC1S2, BLOC1S3, BLOC1S4, BLOC1S5, BLOC1S6, DTNBP1/BLOC1S7 and SNAPIN/BLOC1S8. The BLOC-1 complex associates with the AP-3 protein complex and membrane protein cargos. Interacts with BLOC1S5, F-actin, SNAP25 isoform 1 and isoform 2, SNAP47 and STX12. In terms of processing, phosphorylated. Widely expressed.

It localises to the cytoplasm. Its subcellular location is the membrane. Component of the BLOC-1 complex, a complex that is required for normal biogenesis of lysosome-related organelles (LRO), such as platelet dense granules and melanosomes. In concert with the AP-3 complex, the BLOC-1 complex is required to target membrane protein cargos into vesicles assembled at cell bodies for delivery into neurites and nerve terminals. The BLOC-1 complex, in association with SNARE proteins, is also proposed to be involved in neurite extension. May play a role in intracellular vesicle trafficking, particularly in the vesicle-docking and fusion process. The polypeptide is Biogenesis of lysosome-related organelles complex 1 subunit 6 (BLOC1S6) (Homo sapiens (Human)).